Reading from the N-terminus, the 465-residue chain is Hydroxyacid-oxoacid transhydrogenase, mitochondrial (465 aa).

Lys443 is modified (N6-acetyllysine). Position 450 is a phosphoserine (Ser450).

It belongs to the iron-containing alcohol dehydrogenase family. Hydroxyacid-oxoacid transhydrogenase subfamily. In terms of tissue distribution, expressed in white and brown adipose tissues, liver, and kidney. Expression is differentiation-dependent during in vitro brown and white adipogenesis.

The protein resides in the mitochondrion. It carries out the reaction (S)-3-hydroxybutanoate + 2-oxoglutarate = (R)-2-hydroxyglutarate + acetoacetate. It catalyses the reaction 4-hydroxybutanoate + 2-oxoglutarate = (R)-2-hydroxyglutarate + succinate semialdehyde. Functionally, catalyzes the cofactor-independent reversible oxidation of gamma-hydroxybutyrate (GHB) to succinic semialdehyde (SSA) coupled to reduction of 2-ketoglutarate (2-KG) to D-2-hydroxyglutarate (D-2-HG). L-3-hydroxybutyrate (L-3-OHB) is also a substrate for HOT when using 2-KG as hydrogen acceptor, resulting in the formation of D-2-HG. The chain is Hydroxyacid-oxoacid transhydrogenase, mitochondrial (Adhfe1) from Mus musculus (Mouse).